A 161-amino-acid polypeptide reads, in one-letter code: Type II secretion system protein M (161 aa).

Residues 1–16 (MHNLLALWQQRTRRER) lie on the Cytoplasmic side of the membrane. The helical transmembrane segment at 17–36 (CLLLGMAVVLLIGLVYYTLW) threads the bilayer. Residues 37–161 (QPWQNREAQW…TLVLERSDEK (125 aa)) lie on the Periplasmic side of the membrane.

It belongs to the GSP M family. In terms of assembly, type II secretion system is composed of four main components: the outer membrane complex, the inner membrane complex, the cytoplasmic secretion ATPase and the periplasm-spanning pseudopilus. Forms homodimers. Interacts with PulL/GspL. Interacts with PulE/GspE and PulF/GspF.

Its subcellular location is the cell inner membrane. Inner membrane component of the type II secretion system required for the energy-dependent secretion of extracellular factors such as proteases and toxins from the periplasm. Plays a role in the complex assembly and recruits PulL resulting in a stable complex in the inner membrane. Provides thus a link between the energy-providing PulE protein in the cytoplasm and the rest of the T2SS machinery. This chain is Type II secretion system protein M (pulM), found in Klebsiella pneumoniae.